The following is a 198-amino-acid chain: Threonylcarbamoyl-AMP synthase (198 aa).

The 184-residue stretch at 15-198 (LLKIYHIIKL…AISGQLIRRG (184 aa)) folds into the YrdC-like domain.

This sequence belongs to the SUA5 family. TsaC subfamily.

It localises to the cytoplasm. It catalyses the reaction L-threonine + hydrogencarbonate + ATP = L-threonylcarbamoyladenylate + diphosphate + H2O. Functionally, required for the formation of a threonylcarbamoyl group on adenosine at position 37 (t(6)A37) in tRNAs that read codons beginning with adenine. Catalyzes the conversion of L-threonine, HCO(3)(-)/CO(2) and ATP to give threonylcarbamoyl-AMP (TC-AMP) as the acyladenylate intermediate, with the release of diphosphate. This is Threonylcarbamoyl-AMP synthase from Baumannia cicadellinicola subsp. Homalodisca coagulata.